Reading from the N-terminus, the 903-residue chain is Immunoglobulin superfamily member 22 (903 aa).

Ig-like domains are found at residues 67–158 (PEFV…LLVT), 232–322 (EAIR…AELT), 418–508 (PIKF…AIVT), and 606–696 (PSVL…LHLS). Fibronectin type-III domains are found at residues 703–798 (FASQ…AKDP) and 804–898 (LVQD…MPPP).

The polypeptide is Immunoglobulin superfamily member 22 (IGSF22) (Homo sapiens (Human)).